A 192-amino-acid chain; its full sequence is Large ribosomal subunit protein bL9 (192 aa).

The segment at 173–192 is disordered; it reads ALRPEDFFDPEADGLDENEA. The segment covering 179 to 192 has biased composition (acidic residues); it reads FFDPEADGLDENEA.

It belongs to the bacterial ribosomal protein bL9 family.

Functionally, binds to the 23S rRNA. The sequence is that of Large ribosomal subunit protein bL9 from Rhizobium etli (strain ATCC 51251 / DSM 11541 / JCM 21823 / NBRC 15573 / CFN 42).